The sequence spans 288 residues: NADPH-dependent aldehyde reductase 1, chloroplastic (288 aa).

A compositionally biased stretch (basic and acidic residues) spans 1–18 (MASEKQKQHAQPGKEHVM). Residues 1–32 (MASEKQKQHAQPGKEHVMESSPQFSSSDYQPS) are disordered. Residues 20-32 (SSPQFSSSDYQPS) show a composition bias toward polar residues. Residue 47-71 (SGIGRAVGYCFASEGATVAFTYVKG) coordinates NADP(+). Position 179 (Ser179) interacts with substrate. The active-site Proton acceptor is Tyr192.

Belongs to the short-chain dehydrogenases/reductases (SDR) family.

The protein localises to the plastid. It localises to the chloroplast. Aldehyde reductase that catalyzes the reduction of the aldehyde carbonyl groups on saturated and alpha,beta-unsaturated aldehydes with more than 5 carbons. No activity on alpha,beta-unsaturated ketones. Can use propionaldehyde, butyraldehyde, methylglyoxal, (e)-2-pentenal, (E)-2-hexenal, (Z)-3-hexenal and (E)-2-nonenal as substrates, but not propenal (acrolein), crotonaldehyde, 2-butanone, 3-buten-2-one or 1-penten-3-one. May act as a short alcohol-polyol-sugar dehydrogenase possibly related to carbohydrate metabolism and the acquisition of desiccation tolerance. May also be involved in signal transduction. This chain is NADPH-dependent aldehyde reductase 1, chloroplastic, found in Arabidopsis thaliana (Mouse-ear cress).